The chain runs to 174 residues: Probasin (174 aa).

An N-terminal signal peptide occupies residues 1-18; sequence MMRVIILLLTLHVLGVSS. Cys-77 and Cys-168 form a disulfide bridge.

It belongs to the calycin superfamily. Lipocalin family.

The protein resides in the secreted. In Mus musculus (Mouse), this protein is Probasin (Pbsn).